The primary structure comprises 363 residues: Chorismate synthase (363 aa).

R48 provides a ligand contact to NADP(+). Residues 125–127 (RSS), 238–239 (NA), G278, 293–297 (KPTAS), and R319 contribute to the FMN site.

The protein belongs to the chorismate synthase family. Homotetramer. FMNH2 serves as cofactor.

It carries out the reaction 5-O-(1-carboxyvinyl)-3-phosphoshikimate = chorismate + phosphate. It functions in the pathway metabolic intermediate biosynthesis; chorismate biosynthesis; chorismate from D-erythrose 4-phosphate and phosphoenolpyruvate: step 7/7. Functionally, catalyzes the anti-1,4-elimination of the C-3 phosphate and the C-6 proR hydrogen from 5-enolpyruvylshikimate-3-phosphate (EPSP) to yield chorismate, which is the branch point compound that serves as the starting substrate for the three terminal pathways of aromatic amino acid biosynthesis. This reaction introduces a second double bond into the aromatic ring system. The protein is Chorismate synthase of Acinetobacter baylyi (strain ATCC 33305 / BD413 / ADP1).